The chain runs to 204 residues: uncharacterized protein (204 aa).

The stretch at 109 to 136 (QFDIDVHKDQIEKLKDLYKALLRIAETT) forms a coiled coil.

This is an uncharacterized protein from Bacillus subtilis (strain 168).